Here is a 194-residue protein sequence, read N- to C-terminus: uncharacterized protein (194 aa).

A signal peptide spans 1–22; the sequence is MNKVTKTAIAGLLALFAGNAAA. An intrachain disulfide couples Cys-38 to Cys-78.

It belongs to the fimbrial protein family.

Its subcellular location is the fimbrium. Its function is as follows. Part of the yraHIJK fimbrial operon. Could contribute to adhesion to various surfaces in specific environmental niches. Increases adhesion to eukaryotic T24 bladder epithelial cells in the absence of fim operon. This is an uncharacterized protein from Escherichia coli (strain K12).